Consider the following 370-residue polypeptide: Aminomethyltransferase (370 aa).

This sequence belongs to the GcvT family. In terms of assembly, the glycine cleavage system is composed of four proteins: P, T, L and H.

The enzyme catalyses N(6)-[(R)-S(8)-aminomethyldihydrolipoyl]-L-lysyl-[protein] + (6S)-5,6,7,8-tetrahydrofolate = N(6)-[(R)-dihydrolipoyl]-L-lysyl-[protein] + (6R)-5,10-methylene-5,6,7,8-tetrahydrofolate + NH4(+). The glycine cleavage system catalyzes the degradation of glycine. In Leptospira biflexa serovar Patoc (strain Patoc 1 / Ames), this protein is Aminomethyltransferase.